Reading from the N-terminus, the 197-residue chain is Peptidyl-tRNA hydrolase (197 aa).

Tyrosine 18 contacts tRNA. Catalysis depends on histidine 23, which acts as the Proton acceptor. Tyrosine 68, asparagine 70, and asparagine 116 together coordinate tRNA.

The protein belongs to the PTH family. In terms of assembly, monomer.

It is found in the cytoplasm. The enzyme catalyses an N-acyl-L-alpha-aminoacyl-tRNA + H2O = an N-acyl-L-amino acid + a tRNA + H(+). Functionally, hydrolyzes ribosome-free peptidyl-tRNAs (with 1 or more amino acids incorporated), which drop off the ribosome during protein synthesis, or as a result of ribosome stalling. Its function is as follows. Catalyzes the release of premature peptidyl moieties from peptidyl-tRNA molecules trapped in stalled 50S ribosomal subunits, and thus maintains levels of free tRNAs and 50S ribosomes. The protein is Peptidyl-tRNA hydrolase of Desulfotalea psychrophila (strain LSv54 / DSM 12343).